The primary structure comprises 746 residues: Ferric enterobactin receptor (746 aa).

A signal peptide spans 1–25; the sequence is MSSRALPAVPFLLLSSCLLANAVHA. Residues 39 to 44 carry the TonB box motif; it reads QTVVAT. The 128-residue stretch at 47-174 folds into the TBDR plug domain; the sequence is EETKQAPGVS…AGGVVNIITK (128 aa). Disordered stretches follow at residues 82–102, 235–254, and 397–424; these read VNLT…IDIR, GHES…GREG, and QKLD…KNRS. Residues 84–98 are compositionally biased toward polar residues; the sequence is LTGNSSSGQRGNNRQ. A TBDR beta-barrel domain is found at 179–746; it reads ETHGNLSVYS…TFYTSLTASF (568 aa). Positions 402 to 411 are enriched in polar residues; sequence PSSNTQNTEE. Residues 729-746 carry the TonB C-terminal box motif; sequence ATYNEPGRTFYTSLTASF.

The protein belongs to the TonB-dependent receptor family.

The protein resides in the cell outer membrane. In terms of biological role, specific receptor for the siderophore ferric enterobactin. The polypeptide is Ferric enterobactin receptor (pfeA) (Pseudomonas aeruginosa (strain ATCC 15692 / DSM 22644 / CIP 104116 / JCM 14847 / LMG 12228 / 1C / PRS 101 / PAO1)).